A 314-amino-acid polypeptide reads, in one-letter code: Citrate/oxoglutarate carrier protein (314 aa).

3 Solcar repeats span residues 18 to 100, 107 to 199, and 217 to 301; these read VSFS…EAEY, LNNF…VEDG, and EKIG…AKEF. 5 helical membrane passes run 23–44, 77–97, 111–127, 178–198, and 218–238; these read ILLGACLNLSEVTTLGQPLEVV, IPWAWIEASTKGAVLLFVSAE, ASGILGGVTGGVTQAYL, VAIRQMTNWGSRFGLSRLVED, and KIGASALGGGLSAWNQPIEVI. Residues 246 to 259 mediate DNA binding; the sequence is KEDPNRPKNLTVGK. Residues 273–294 traverse the membrane as a helical segment; the sequence is LYRGVTPRIGLGIWQTVFMVGF.

The protein belongs to the mitochondrial carrier (TC 2.A.29) family.

It localises to the mitochondrion inner membrane. The protein localises to the mitochondrion matrix. Its subcellular location is the mitochondrion nucleoid. With respect to regulation, strongly inhibited by mersalyl, p-chloromercuribenzenesulfonate, mercuric chloride, N-ethylmaleimide, pyridoxal 5'-phosphate, bathophenanthroline, and tannic acid. Partially inhibited by alpha-cyanocinnamate and bromescol purple. Weakly inhibited by butylmalonate and phenylsuccinate. Not inhibited by 1,2,3-benzenetricarboxylate or carboxyatractyloside. Functionally, mitochondrial antiporter which catalyzes the transport of citrate and oxoglutarate across the membrane. Also shows specificity for oxaloacetate, and to a lesser extent succinate and fumarate. Transports isocitrate, cis-aconitate and L-malate with very low efficiency. Does not show uniporter activity. Helps to maintain normal citrate levels and NADPH/NADP(+) ratios under conditions of oxidative stress. In addition, associates with the mitochondrial nucleoid and binds DNA in vitro, although the relevance of these data in vivo is unclear. This is Citrate/oxoglutarate carrier protein (YHM2) from Saccharomyces cerevisiae (strain ATCC 204508 / S288c) (Baker's yeast).